We begin with the raw amino-acid sequence, 130 residues long: Holo-[acyl-carrier-protein] synthase (130 aa).

Positions 9 and 58 each coordinate Mg(2+).

The protein belongs to the P-Pant transferase superfamily. AcpS family. The cofactor is Mg(2+).

It localises to the cytoplasm. The enzyme catalyses apo-[ACP] + CoA = holo-[ACP] + adenosine 3',5'-bisphosphate + H(+). Its function is as follows. Transfers the 4'-phosphopantetheine moiety from coenzyme A to a Ser of acyl-carrier-protein. The sequence is that of Holo-[acyl-carrier-protein] synthase from Mycobacterium tuberculosis (strain CDC 1551 / Oshkosh).